Consider the following 175-residue polypeptide: Photosynthetic NDH subunit of subcomplex B 4, chloroplastic (175 aa).

A chloroplast-targeting transit peptide spans 1-24; that stretch reads MAEAFTSFTFTNLHIPSSYNHSPK. Residues 95-111 traverse the membrane as a helical segment; that stretch reads VYMFYIMFTCWGCLYFG.

As to quaternary structure, part of the chloroplast NDH complex, composed of a mixture of chloroplast and nucleus encoded subunits. Component of the NDH subcomplex B, at least composed of PnsB1, PnsB2, PnsB3, PnsB4 and PnsB5.

It localises to the plastid. The protein localises to the chloroplast thylakoid membrane. Its function is as follows. NDH shuttles electrons from NAD(P)H:plastoquinone, via FMN and iron-sulfur (Fe-S) centers, to quinones in the photosynthetic chain and possibly in a chloroplast respiratory chain. The immediate electron acceptor for the enzyme in this species is believed to be plastoquinone. Couples the redox reaction to proton translocation, and thus conserves the redox energy in a proton gradient. The chain is Photosynthetic NDH subunit of subcomplex B 4, chloroplastic from Arabidopsis thaliana (Mouse-ear cress).